The primary structure comprises 175 residues: Transcriptional activatory protein BadR (175 aa).

One can recognise an HTH marR-type domain in the interval 20 to 156; sequence ANRLFFRLYQ…TLHYLLKILD (137 aa).

Its function is as follows. Transcriptional activator of genes for the anaerobic degradation of benzoate. This is Transcriptional activatory protein BadR (badR) from Rhodopseudomonas palustris (strain ATCC BAA-98 / CGA009).